We begin with the raw amino-acid sequence, 956 residues long: Calsyntenin-3 (956 aa).

The first 19 residues, 1-19 (MTLLLVSLLLASLLQISSG), serve as a signal peptide directing secretion. Topologically, residues 1-21 (MTLLLVSLLLASLLQISSGNK) are cytoplasmic. Over 20 to 847 (NKANKHKPWI…SHRNSMVPSA (828 aa)) the chain is Extracellular. An intramembrane region (helical) is located at residues 22-42 (ANKHKPWIEAEYQGIVMENDN). Cadherin domains follow at residues 29 to 145 (IEAE…APVF) and 146 to 246 (VERL…KPSW). The Cytoplasmic segment spans residues 43-73 (TVLLNPPLFALDKDAPLRYAGEICGFRLHGS). Residues 74–94 (GVPFEAVILDKATGEGLIRAK) constitute an intramembrane region (helical). Residues 95–139 (EPVDCEAQKEHTFTIQAYDCGEGPDGTNTKKSHKATVHVRVNDVN) are Cytoplasmic-facing. The segment at residues 140–160 (EFAPVFVERLYRAAVTEGKLY) is an intramembrane region (helical). The Cytoplasmic segment spans residues 161 to 248 (DRILRVEAID…KPTCKPSWQG (88 aa)). A helical membrane pass occupies residues 249–269 (WNKRIEYAPGAGSLALFPGIR). Topologically, residues 270-357 (LETCDEPLWN…GTQAVQVPLG (88 aa)) are lumenal. Asn299, Asn327, Asn347, Asn507, and Asn740 each carry an N-linked (GlcNAc...) asparagine glycan. The helical transmembrane segment at 848–868 (ATLIIVVCVGFLVLMVILGLV) threads the bilayer. Topologically, residues 869–956 (RIHSLHRRVS…RIIESPPHRY (88 aa)) are cytoplasmic. The tract at residues 916–956 (QTCVAGVAGGQQEEEDSSDSEAADSPSSDERRIIESPPHRY) is disordered. Over residues 927 to 937 (QEEEDSSDSEA) the composition is skewed to acidic residues. The segment covering 943–956 (SDERRIIESPPHRY) has biased composition (basic and acidic residues).

The protein belongs to the calsyntenin family. In terms of assembly, interacts (via cadherin domains) with both alpha and beta isoforms of neurexins (NRXN1, NRXN2 and NRXN3). Directly interacts with APBA2. Forms a tripartite complex with APBA2 and APP. Interacts with low affinity with KLC1. Interacts with SLC23A2/SVCT2. Interacts with CIDEA; inhibiting the lipid transferase activity of CIDEA. Interacts with CIDEC; inhibiting the lipid transferase activity of CIDEC. In terms of processing, proteolytically processed under normal cellular conditions. A primary zeta-cleavage generates a large extracellular (soluble) N-terminal domain (sAlc) and a short C-terminal transmembrane fragment (CTF1). A secondary cleavage catalyzed by gamma-secretase within the transmembrane domain releases the beta-Alc-beta chain in the extracellular milieu and produces an intracellular fragment (AlcICD). This processing is strongly suppressed in the tripartite complex formed with APBA2 and APP, which seems to prevent the association with gamma-secretase. Post-translationally, ubiquitinated: endoplasmic reticulum-localized protein is ubiquitinated and degraded by the endoplasmic reticulum-associated degradation (ERAD) pathway. Restricted to the brain (at protein level). In the cerebral cortex, found in the somas and neuropil of all layers. Expressed at highest levels in neurons of cortical layer 5 and, at lower levels, in neurons of the upper layers. Highly expressed in Purkinje cells. Also found in a few scattered interneurons throughout the granule cell layer and occasionally in neurons in the molecular layer (at protein level). In all layers, high levels in a subpopulation of presumptive GABAergic neurons (based on morphology). In terms of tissue distribution, expression is restricted to adipose tissue, with high expression in thermogenic adipocytes (brown adipose tissue).

It is found in the postsynaptic cell membrane. Its subcellular location is the endoplasmic reticulum membrane. The protein localises to the golgi apparatus membrane. It localises to the cell projection. The protein resides in the dendrite. It is found in the lipid droplet. Functionally, postsynaptic adhesion molecule that binds to presynaptic neurexins to mediate both excitatory and inhibitory synapse formation. Promotes synapse development by acting as a cell adhesion molecule at the postsynaptic membrane, which associates with both neurexin-alpha and neurexin-beta proteins at the presynaptic membrane. Regulates the balance between excitatory and inhibitory synapses by inhibiting formation of excitatory parallel-fiber synapses and promoting formation of inhibitory synapses in the same neuron. May also be involved in ascorbate (vitamin C) uptake via its interaction with SLC23A2/SVCT2. Complex formation with APBA2 and APP, stabilizes APP metabolism and enhances APBA2-mediated suppression of beta-APP40 secretion, due to the retardation of intracellular APP maturation. Adipose-specific isoform that plays a key role in adaptive thermogenesis. Facilitates the efficient use of stored triglyceride by promoting multilocular morphology of thermogenic adipocytes: acts by inhibiting the activity of CIDEA and CIDEC on lipid droplets, thereby preventing lipid droplet fusion and facilitating lipid utilization. May also participate in adaptive thermogenesis by promoting sympathetic innervation of thermogenic adipose tissue: acts by driving secretion of neurotrophic factor S100B from brown adipocytes, stimulating neurite outgrowth from sympathetic neurons. The chain is Calsyntenin-3 from Mus musculus (Mouse).